We begin with the raw amino-acid sequence, 375 residues long: Monocyte differentiation antigen CD14 (375 aa).

The first 19 residues, Met1 to Ala19, serve as a signal peptide directing secretion. Cystine bridges form between Cys25/Cys36 and Cys34/Cys51. Asn37 carries an N-linked (GlcNAc...) asparagine glycan. LRR repeat units follow at residues Ala54–Tyr82, Ala83–Leu118, Lys119–Leu144, Ser145–Leu172, Lys173–Leu196, Thr197–Ile224, Gln225–Pro251, His252–Leu278, Asn279–Leu299, Arg300–Val321, and Asp322–Val349. Residue Asn151 is glycosylated (N-linked (GlcNAc...) asparagine). Disulfide bonds link Cys187-Cys217 and Cys241-Cys272. Asn282 carries N-linked (GlcNAc...) asparagine glycosylation. The required for response to bacterial lipopolysaccharide (LPS) stretch occupies residues Gln290 to Ala375. A glycan (N-linked (GlcNAc...) asparagine) is linked at Asn323. An O-linked (GalNAc...) threonine glycan is attached at Thr336. Asn345 carries GPI-anchor amidated asparagine lipidation. Positions Ser346–Ala375 are cleaved as a propeptide — removed in mature form.

In terms of assembly, interacts with LPS-bound LPB. Belongs to the lipopolysaccharide (LPS) receptor, a multi-protein complex containing at least CD14, LY96 and TLR4. Interacts with LPAR1. Interacts with the TLR2:TLR6 or TLR2:TLR1 heterodimers; upon interaction with ligands such as diacylated lipopeptides and triacylated lipopeptides, respectively. Interacts with MYO18A. Interacts with FSTL1. In terms of processing, N- and O- glycosylated. O-glycosylated with a core 1 or possibly core 8 glycan. In terms of tissue distribution, detected on macrophages (at protein level). Expressed strongly on the surface of monocytes and weakly on the surface of granulocytes; also expressed by most tissue macrophages.

The protein localises to the cell membrane. The protein resides in the secreted. Its subcellular location is the membrane raft. It localises to the golgi apparatus. In terms of biological role, coreceptor for bacterial lipopolysaccharide. In concert with LBP, binds to monomeric lipopolysaccharide and delivers it to the LY96/TLR4 complex, thereby mediating the innate immune response to bacterial lipopolysaccharide (LPS). Acts via MyD88, TIRAP and TRAF6, leading to NF-kappa-B activation, cytokine secretion and the inflammatory response. Acts as a coreceptor for TLR2:TLR6 heterodimer in response to diacylated lipopeptides and for TLR2:TLR1 heterodimer in response to triacylated lipopeptides, these clusters trigger signaling from the cell surface and subsequently are targeted to the Golgi in a lipid-raft dependent pathway. Binds electronegative LDL (LDL(-)) and mediates the cytokine release induced by LDL(-). This chain is Monocyte differentiation antigen CD14 (CD14), found in Homo sapiens (Human).